The following is a 707-amino-acid chain: Leucine-rich repeat neuronal protein 3 (707 aa).

Positions 1 to 22 (MKDAPLQIHVLLGLAITALVQA) are cleaved as a signal peptide. Positions 23–69 (GDKKVDCPQLCTCEIRPWFTPRSIYMEASTVDCNDLGLLNFPARLPA) constitute an LRRNT domain. Topologically, residues 23–626 (GDKKVDCPQL…DGKENGKSHT (604 aa)) are extracellular. LRR repeat units follow at residues 70–91 (DTQI…TDFP), 93–114 (NLTG…NVQK), 117–138 (QLLS…CLYG), 141–162 (NLQE…AFVG), 165–186 (NLLR…WFEA), 189–210 (NLEI…NFQP), 213–234 (KLRS…ALVG), 237–258 (NLES…ALQK), 261–282 (NLKF…DFSN), 285–304 (HLKE…DSLA), 310–332 (DLRK…AFFR), and 335–358 (KLES…ESLP). Residues Asn-93 and Asn-103 are each glycosylated (N-linked (GlcNAc...) asparagine). Asn-223 carries an N-linked (GlcNAc...) asparagine glycan. The LRRCT domain maps to 368 to 421 (NPIRCDCVIRWINMNKTNIRFMEPDSLFCVDPPEFQGQNVRQVHFRDMMEICLP). Asn-382 carries N-linked (GlcNAc...) asparagine glycosylation. The Ig-like C2-type domain occupies 421 to 514 (PLIAPESFPS…DLKSIMIKVG (94 aa)). An intrachain disulfide couples Cys-444 to Cys-496. N-linked (GlcNAc...) asparagine glycosylation is found at Asn-522, Asn-579, and Asn-608. In terms of domain architecture, Fibronectin type-III spans 523–614 (GSLNIKIRDI…QCVNVTTKSL (92 aa)). Residues 627–647 (VFVACVGGLLGIIGVMCLFGC) traverse the membrane as a helical segment. The Cytoplasmic portion of the chain corresponds to 648 to 707 (VSQEGNCENEHSYTVNHCHKPTLAFSELYPPLINLWESSKEKPASLEVKATAIGVPTSMS).

Its subcellular location is the membrane. The protein is Leucine-rich repeat neuronal protein 3 (Lrrn3) of Rattus norvegicus (Rat).